The chain runs to 127 residues: MNQCKVMNDGYLEKRSNGLLQLWKKKRCVLSDEGLRLYGCKGDSGKEMRFEQMTTLDCVEYKRGLVYFTIVMNDGKEVDFRCQQEGTAWNAEIALALVRFKNRVAVQTGRNRHLSHLGSCGEGDVEL.

Residues 5-108 (KVMNDGYLEK…RFKNRVAVQT (104 aa)) form the PH domain.

It belongs to the PHLDA3 family.

It localises to the cytoplasm. The protein resides in the membrane. Functionally, p53/tp53-regulated repressor of Akt/akt1 signaling. Represses akt1 by preventing akt1-binding to membrane lipids, thereby inhibiting akt1 translocation to the cellular membrane and activation. Contributes to p53/tp53-dependent apoptosis by repressing akt1 activity. Its direct transcription regulation by p53/tp53 may explain how p53/tp53 can negatively regulate akt1. May act as a tumor suppressor. The polypeptide is Pleckstrin homology-like domain family A member 3 (phlda3) (Danio rerio (Zebrafish)).